We begin with the raw amino-acid sequence, 165 residues long: Large ribosomal subunit protein uL11 (165 aa).

Phosphoserine is present on serine 38. Residue lysine 40 forms a Glycyl lysine isopeptide (Lys-Gly) (interchain with G-Cter in SUMO2) linkage. Lysine 48 participates in a covalent cross-link: Glycyl lysine isopeptide (Lys-Gly) (interchain with G-Cter in ubiquitin). N6-acetyllysine is present on lysine 54. Lysine 83 participates in a covalent cross-link: Glycyl lysine isopeptide (Lys-Gly) (interchain with G-Cter in ubiquitin). Position 165 is a phosphoserine (serine 165).

Belongs to the universal ribosomal protein uL11 family. Component of the large ribosomal subunit. Mature ribosomes consist of a small (40S) and a large (60S) subunit. The 40S subunit contains about 33 different proteins and 1 molecule of RNA (18S). The 60S subunit contains about 49 different proteins and 3 molecules of RNA (28S, 5.8S and 5S). Ubiquitinated at Lys-48 and Lys-83 by RNF14 and RNF25 in response to ribosome collisions (ribosome stalling).

It localises to the cytoplasm. Functionally, component of the large ribosomal subunit. The ribosome is a large ribonucleoprotein complex responsible for the synthesis of proteins in the cell. Binds directly to 26S ribosomal RNA. In Bos taurus (Bovine), this protein is Large ribosomal subunit protein uL11 (RPL12).